Here is a 273-residue protein sequence, read N- to C-terminus: NAD-dependent protein deacylase (273 aa).

The Deacetylase sirtuin-type domain maps to 20-272 (RERLRQRIFF…PEFVEKLLKG (253 aa)). 48 to 67 (GAGISAESGIRTFRAADGLW) is a binding site for NAD(+). Residues Tyr-92 and Arg-95 each contribute to the substrate site. NAD(+) is bound at residue 129 to 132 (QNID). His-147 acts as the Proton acceptor in catalysis. Zn(2+)-binding residues include Cys-155 and Cys-174. NAD(+)-binding positions include 214-216 (GTS), 240-242 (NLE), and Ala-258.

Belongs to the sirtuin family. Class III subfamily. The cofactor is Zn(2+).

The protein localises to the cytoplasm. It catalyses the reaction N(6)-acetyl-L-lysyl-[protein] + NAD(+) + H2O = 2''-O-acetyl-ADP-D-ribose + nicotinamide + L-lysyl-[protein]. The catalysed reaction is N(6)-succinyl-L-lysyl-[protein] + NAD(+) + H2O = 2''-O-succinyl-ADP-D-ribose + nicotinamide + L-lysyl-[protein]. It carries out the reaction N(6)-(2-hydroxyisobutanoyl)-L-lysyl-[protein] + NAD(+) + H2O = 2''-O-(2-hydroxyisobutanoyl)-ADP-D-ribose + nicotinamide + L-lysyl-[protein]. Its function is as follows. NAD-dependent lysine deacetylase that specifically removes acetyl groups on target proteins. Also acts as a protein-lysine deacylase by mediating protein desuccinylation and de-2-hydroxyisobutyrylation. Modulates the activities of several proteins which are inactive in their acylated form. In Escherichia coli O6:H1 (strain CFT073 / ATCC 700928 / UPEC), this protein is NAD-dependent protein deacylase.